The sequence spans 292 residues: Probable deoxyhypusine synthase (292 aa).

Lys267 (nucleophile) is an active-site residue.

The protein belongs to the deoxyhypusine synthase family. Requires NAD(+) as cofactor.

The enzyme catalyses [eIF5A protein]-L-lysine + spermidine = [eIF5A protein]-deoxyhypusine + propane-1,3-diamine. It functions in the pathway protein modification; eIF5A hypusination. Its function is as follows. Catalyzes the NAD-dependent oxidative cleavage of spermidine and the subsequent transfer of the butylamine moiety of spermidine to the epsilon-amino group of a specific lysine residue of the eIF-5A precursor protein to form the intermediate deoxyhypusine residue. The chain is Probable deoxyhypusine synthase (dys) from Pyrobaculum aerophilum (strain ATCC 51768 / DSM 7523 / JCM 9630 / CIP 104966 / NBRC 100827 / IM2).